Consider the following 84-residue polypeptide: ATP synthase subunit c (84 aa).

Helical transmembrane passes span 9 to 29 (IFGS…GFSL) and 54 to 74 (IVAG…LLFI).

This sequence belongs to the ATPase C chain family. In terms of assembly, F-type ATPases have 2 components, F(1) - the catalytic core - and F(0) - the membrane proton channel. F(1) has five subunits: alpha(3), beta(3), gamma(1), delta(1), epsilon(1). F(0) has three main subunits: a(1), b(2) and c(10-14). The alpha and beta chains form an alternating ring which encloses part of the gamma chain. F(1) is attached to F(0) by a central stalk formed by the gamma and epsilon chains, while a peripheral stalk is formed by the delta and b chains.

It is found in the cell inner membrane. In terms of biological role, f(1)F(0) ATP synthase produces ATP from ADP in the presence of a proton or sodium gradient. F-type ATPases consist of two structural domains, F(1) containing the extramembraneous catalytic core and F(0) containing the membrane proton channel, linked together by a central stalk and a peripheral stalk. During catalysis, ATP synthesis in the catalytic domain of F(1) is coupled via a rotary mechanism of the central stalk subunits to proton translocation. Key component of the F(0) channel; it plays a direct role in translocation across the membrane. A homomeric c-ring of between 10-14 subunits forms the central stalk rotor element with the F(1) delta and epsilon subunits. This Histophilus somni (strain 2336) (Haemophilus somnus) protein is ATP synthase subunit c.